The chain runs to 312 residues: Methionyl-tRNA formyltransferase (312 aa).

113-116 (SLLP) provides a ligand contact to (6S)-5,6,7,8-tetrahydrofolate.

It belongs to the Fmt family.

The catalysed reaction is L-methionyl-tRNA(fMet) + (6R)-10-formyltetrahydrofolate = N-formyl-L-methionyl-tRNA(fMet) + (6S)-5,6,7,8-tetrahydrofolate + H(+). In terms of biological role, attaches a formyl group to the free amino group of methionyl-tRNA(fMet). The formyl group appears to play a dual role in the initiator identity of N-formylmethionyl-tRNA by promoting its recognition by IF2 and preventing the misappropriation of this tRNA by the elongation apparatus. The chain is Methionyl-tRNA formyltransferase from Francisella philomiragia subsp. philomiragia (strain ATCC 25017 / CCUG 19701 / FSC 153 / O#319-036).